Reading from the N-terminus, the 159-residue chain is Phosphopantetheine adenylyltransferase (159 aa).

Substrate is bound at residue Thr-10. Residues 10 to 11 (TF) and His-18 contribute to the ATP site. Residues Lys-42, Met-74, and Arg-88 each coordinate substrate. Residues 89-91 (GLR), Glu-99, and 124-130 (WSFISSS) each bind ATP.

The protein belongs to the bacterial CoaD family. Homohexamer. Mg(2+) is required as a cofactor.

The protein localises to the cytoplasm. It catalyses the reaction (R)-4'-phosphopantetheine + ATP + H(+) = 3'-dephospho-CoA + diphosphate. Its pathway is cofactor biosynthesis; coenzyme A biosynthesis; CoA from (R)-pantothenate: step 4/5. Functionally, reversibly transfers an adenylyl group from ATP to 4'-phosphopantetheine, yielding dephospho-CoA (dPCoA) and pyrophosphate. The sequence is that of Phosphopantetheine adenylyltransferase from Shigella sonnei (strain Ss046).